The following is a 533-amino-acid chain: Retinoic acid receptor RXR-beta (533 aa).

A disordered region spans residues 1–24; sequence MSWAARPPFLPQRHAAGQCGPVGV. The modulating stretch occupies residues 1 to 204; sequence MSWAARPPFL…PGGPGAGKRL (204 aa). R25 carries the omega-N-methylarginine modification. Positions 37-183 are disordered; sequence RRRRPWLDPA…GPPEDVKPPV (147 aa). Residues 46–61 are compositionally biased toward low complexity; it reads AAAAAAAAAAGEQQTP. A compositionally biased stretch (basic and acidic residues) spans 67 to 82; sequence EAGRDGMGDSGRDSRS. The segment covering 83-94 has biased composition (low complexity); the sequence is PDSSSPNPLSQG. 2 stretches are compositionally biased toward pro residues: residues 95 to 109 and 118 to 129; these read APPP…PPSS and APPPPPMPPPQL. Residues 130 to 143 are compositionally biased toward low complexity; that stretch reads GSPFPVISSSMGSP. Residues 144-153 show a composition bias toward pro residues; sequence GLPPPAPPGF. 2 NR C4-type zinc fingers span residues 205-225 and 241-265; these read CAIC…CEGC and CRDN…YQKC. Positions 205 to 270 form a DNA-binding region, nuclear receptor; that stretch reads CAICGDRSSG…RYQKCLATGM (66 aa). Positions 271–295 are hinge; that stretch reads KREAVQEERQRGKDKDGDGEGAGGA. The segment covering 276 to 288 has biased composition (basic and acidic residues); the sequence is QEERQRGKDKDGD. Disordered regions lie at residues 276–299 and 313–336; these read QEER…PEEM and QKSD…NDPV. Positions 296-529 constitute an NR LBD domain; the sequence is PEEMPVDRIL…TFLMEMLEAP (234 aa). A compositionally biased stretch (gly residues) spans 320–329; the sequence is EGPGGTGGSG.

It belongs to the nuclear hormone receptor family. NR2 subfamily. In terms of assembly, homodimer (in vitro). Heterodimer with other retinoic acid receptor family members. Binds DNA preferentially as a RAR/RXR heterodimer. Interacts with NR1H3. Interacts with AKAP13.

It localises to the nucleus. The protein resides in the cytoplasm. Its function is as follows. Receptor for retinoic acid. Retinoic acid receptors bind as heterodimers to their target response elements in response to their ligands, all-trans or 9-cis retinoic acid, and regulate gene expression in various biological processes. The RAR/RXR heterodimers bind to the retinoic acid response elements (RARE). The chain is Retinoic acid receptor RXR-beta (RXRB) from Canis lupus familiaris (Dog).